Reading from the N-terminus, the 93-residue chain is Small ribosomal subunit protein uS19 (93 aa).

Belongs to the universal ribosomal protein uS19 family.

Protein S19 forms a complex with S13 that binds strongly to the 16S ribosomal RNA. The polypeptide is Small ribosomal subunit protein uS19 (Geobacter metallireducens (strain ATCC 53774 / DSM 7210 / GS-15)).